Here is a 329-residue protein sequence, read N- to C-terminus: UDP-sugar transporter sqv-7 (329 aa).

9 helical membrane-spanning segments follow: residues Ser-15 to Leu-34, Ser-41 to Phe-63, Tyr-86 to Leu-108, Ser-129 to Leu-151, Ala-155 to Tyr-174, Tyr-187 to Gly-209, Thr-224 to Val-246, Ser-253 to Ser-275, and Val-280 to Val-302.

The protein belongs to the TPT transporter family. SLC35D subfamily.

The protein localises to the golgi apparatus membrane. Functionally, acts as a transporter of UDP-glucuronic acid (UDP-GlcA), UDP-N-acetylgalactosamine (UDP-GalNAc) and UDP-galactose (UDP-Gal) from the cytoplasm into the Golgi lumen. Involved in the biosynthesis of glycoconjugates that play a pivotal role in development. Involved in the synthesis of chondroitin sulfate and heparan sulfate proteoglycans. Required for embryonic development. Involved in vulva epithelium invagination and embryonic development. Involved in the directed migration of hermaphrodite-specific neurons. The chain is UDP-sugar transporter sqv-7 (sqv-7) from Caenorhabditis elegans.